We begin with the raw amino-acid sequence, 473 residues long: Kynurenine 3-monooxygenase (473 aa).

It belongs to the aromatic-ring hydroxylase family. KMO subfamily. FAD serves as cofactor.

It is found in the mitochondrion outer membrane. It carries out the reaction L-kynurenine + NADPH + O2 + H(+) = 3-hydroxy-L-kynurenine + NADP(+) + H2O. It participates in cofactor biosynthesis; NAD(+) biosynthesis; quinolinate from L-kynurenine: step 1/3. In terms of biological role, catalyzes the hydroxylation of L-kynurenine (L-Kyn) to form 3-hydroxy-L-kynurenine (L-3OHKyn). Required for synthesis of quinolinic acid. In Debaryomyces hansenii (strain ATCC 36239 / CBS 767 / BCRC 21394 / JCM 1990 / NBRC 0083 / IGC 2968) (Yeast), this protein is Kynurenine 3-monooxygenase.